A 476-amino-acid polypeptide reads, in one-letter code: Xylan O-acetyltransferase 4 (476 aa).

The disordered stretch occupies residues 1-37 (MTKPQQQSPPSTTATTTTSPPPPPPSTPPPASSSSSS). Residues 1–63 (MTKPQQQSPP…SLLSALRRSP (63 aa)) are Cytoplasmic-facing. Positions 8–18 (SPPSTTATTTT) are enriched in low complexity. Residues 19–31 (SPPPPPPSTPPPA) show a composition bias toward pro residues. Residues 64–80 (VTTLVAAFFLLALFMYG) traverse the membrane as a helical; Signal-anchor for type II membrane protein segment. The Lumenal portion of the chain corresponds to 81–476 (EDVRTLAELS…PSPHPPLPPQ (396 aa)). N-linked (GlcNAc...) asparagine glycans are attached at residues Asn-103, Asn-128, and Asn-167. Disulfide bonds link Cys-117–Cys-168, Cys-139–Cys-204, Cys-148–Cys-444, and Cys-360–Cys-440. The GDS motif signature appears at 191–193 (GDS). The active-site Nucleophile is Ser-193. Residues Asn-299 and Asn-369 are each glycosylated (N-linked (GlcNAc...) asparagine). The active-site Proton donor is the Asp-439. The DXXH motif signature appears at 439 to 442 (DCIH). The active-site Proton acceptor is His-442.

It belongs to the PC-esterase family. TBL subfamily. In terms of tissue distribution, highly expressed in leaves. Expressed in roots, stems and inflorescences.

It localises to the golgi apparatus membrane. Functionally, xylan acetyltransferase required for 2-O- and 3-O-monoacetylation of xylosyl residues in xylan. Catalyzes the 2-O-acetylation of xylan, followed by nonenzymatic acetyl migration to the O-3 position, resulting in products that are monoacetylated at both O-2 and O-3 positions. The protein is Xylan O-acetyltransferase 4 of Oryza sativa subsp. japonica (Rice).